Consider the following 117-residue polypeptide: Large ribosomal subunit protein uL18 (117 aa).

The protein belongs to the universal ribosomal protein uL18 family. As to quaternary structure, part of the 50S ribosomal subunit; part of the 5S rRNA/L5/L18/L25 subcomplex. Contacts the 5S and 23S rRNAs.

In terms of biological role, this is one of the proteins that bind and probably mediate the attachment of the 5S RNA into the large ribosomal subunit, where it forms part of the central protuberance. This Mannheimia succiniciproducens (strain KCTC 0769BP / MBEL55E) protein is Large ribosomal subunit protein uL18.